The primary structure comprises 454 residues: tRNA modification GTPase MnmE (454 aa).

Arginine 23, glutamate 80, and lysine 120 together coordinate (6S)-5-formyl-5,6,7,8-tetrahydrofolate. The 162-residue stretch at glycine 216 to glycine 377 folds into the TrmE-type G domain. K(+) is bound at residue asparagine 226. GTP contacts are provided by residues asparagine 226 to serine 231, threonine 245 to threonine 251, aspartate 270 to glycine 273, asparagine 335 to aspartate 338, and serine 358 to arginine 360. Serine 230 serves as a coordination point for Mg(2+). K(+) is bound by residues threonine 245, isoleucine 247, and threonine 250. Threonine 251 serves as a coordination point for Mg(2+). Lysine 454 is a (6S)-5-formyl-5,6,7,8-tetrahydrofolate binding site.

Belongs to the TRAFAC class TrmE-Era-EngA-EngB-Septin-like GTPase superfamily. TrmE GTPase family. In terms of assembly, homodimer. Heterotetramer of two MnmE and two MnmG subunits. The cofactor is K(+).

The protein localises to the cytoplasm. Functionally, exhibits a very high intrinsic GTPase hydrolysis rate. Involved in the addition of a carboxymethylaminomethyl (cmnm) group at the wobble position (U34) of certain tRNAs, forming tRNA-cmnm(5)s(2)U34. The sequence is that of tRNA modification GTPase MnmE from Escherichia coli O127:H6 (strain E2348/69 / EPEC).